Consider the following 775-residue polypeptide: Hepatocyte growth factor-regulated tyrosine kinase substrate (775 aa).

Residues 15–143 (ATSQLLLETD…IMKVEGHVFP (129 aa)) enclose the VHS domain. The FYVE-type zinc-finger motif lies at 160-220 (WVDAEECHRC…VCEPCYEQLN (61 aa)). The Zn(2+) site is built by C166, C169, C182, C185, C190, and C193. Residue K207 is modified to N6-acetyllysine. Positions 212 and 215 each coordinate Zn(2+). Y216 is modified (phosphotyrosine). The segment at 223-319 (AEGKASSTTE…SPVNSSAPLA (97 aa)) is disordered. The tract at residues 225–541 (GKASSTTELP…QRLQEQEKER (317 aa)) is interaction with SNX1. One can recognise a UIM domain in the interval 258–277 (QEEEELQLALALSQSEAEEK). The segment covering 307-316 (LYSSPVNSSA) has biased composition (polar residues). Y308, Y329, and Y334 each carry phosphotyrosine. The tract at residues 338–405 (KQEEARKSPT…NGESEESHEQ (68 aa)) is disordered. The segment at 443 to 541 (SINTMHPQLL…QRLQEQEKER (99 aa)) is interaction with SNAP25 and TRAK2. An interaction with STAM region spans residues 452–570 (LELLNQLDER…FPLPYAQLQA (119 aa)). Residues 478–775 (ARGALSALRE…GSEAQLISFD (298 aa)) form an interaction with NF2 region. K549 is modified (N6-succinyllysine). The span at 640-657 (PGAQAAPQAQAGPTTSPA) shows a compositional bias: low complexity. 2 disordered regions span residues 640-690 (PGAQ…PQTS) and 719-775 (QDAS…ISFD). The span at 658–690 (YSSYQPTPTPGYQSVASQAPQSLPAISQPPQTS) shows a compositional bias: polar residues. A compositionally biased stretch (pro residues) spans 744–761 (TGPPQQQPPVAQPAPTQG).

As to quaternary structure, component of the ESCRT-0 complex composed of STAM or STAM2 and HGS. Part of a complex at least composed of HSG, STAM2 (or probably STAM) and EPS15. Interacts with STAM. Interacts with STAM2. Interacts with EPS15; the interaction is direct, calcium-dependent and inhibited by SNAP25. Identified in a complex with STAM and LITAF. Found in a complex with STAM and E3 ligase ITCH and DTX3L. Interacts with E3 ligase DTX3L; the interaction brings together STAM and HSG, promotes their recruitment to early endosomes and decreases STAM and HGS ubiquitination by ITCH. Interacts with NF2; the interaction is direct. Interacts with ubiquitin; the interaction is direct. Interacts with VPS37C. Interacts with SMAD1, SMAD2 and SMAD3. Interacts with TSG101; the interaction mediates the association with the ESCRT-I complex. Interacts with SNAP25; the interaction is direct and decreases with addition of increasing concentrations of free calcium. Interacts with SNX1; the interaction is direct. Component of a 550 kDa membrane complex at least composed of HGS and SNX1 but excluding EGFR. Interacts with TRAK1. Interacts with TRAK2. Component of the CART complex, at least composed of ACTN4, HGS/HRS, MYO5B and TRIM3. Interacts with ARRDC3. Identified in a complex containing at least ARRDC4, AVPR2 and HGS. Interacts (via UIM domain) with UBQLN1 (via ubiquitin-like domain). Interacts with LAPTM4B; promotes HGS ubiquitination. In terms of processing, phosphorylated on Tyr-334. This phosphorylation occurs in response to EGF. A minor site of phosphorylation on Tyr-329 is detected. Protein phosphorylation may also be triggered in response to IL-2, GM-CSF and HGF. Ubiquitinated by ITCH. In terms of tissue distribution, ubiquitous expression in adult and fetal tissues with higher expression in testis.

Its subcellular location is the cytoplasm. It localises to the early endosome membrane. It is found in the endosome. The protein resides in the multivesicular body membrane. Functionally, involved in intracellular signal transduction mediated by cytokines and growth factors. When associated with STAM, it suppresses DNA signaling upon stimulation by IL-2 and GM-CSF. Could be a direct effector of PI3-kinase in vesicular pathway via early endosomes and may regulate trafficking to early and late endosomes by recruiting clathrin. May concentrate ubiquitinated receptors within clathrin-coated regions. Involved in down-regulation of receptor tyrosine kinase via multivesicular body (MVBs) when complexed with STAM (ESCRT-0 complex). The ESCRT-0 complex binds ubiquitin and acts as a sorting machinery that recognizes ubiquitinated receptors and transfers them to further sequential lysosomal sorting/trafficking processes. May contribute to the efficient recruitment of SMADs to the activin receptor complex. Involved in receptor recycling via its association with the CART complex, a multiprotein complex required for efficient transferrin receptor recycling but not for EGFR degradation. This is Hepatocyte growth factor-regulated tyrosine kinase substrate (Hgs) from Mus musculus (Mouse).